The sequence spans 328 residues: Tryptophan--tRNA ligase (328 aa).

ATP contacts are provided by residues 9–11 (QPS) and 17–18 (GN). The short motif at 10-18 (PSGVITIGN) is the 'HIGH' region element. Asp132 contributes to the L-tryptophan binding site. ATP contacts are provided by residues 144–146 (GED), Ile183, and 192–196 (KMSKS). Residues 192-196 (KMSKS) carry the 'KMSKS' region motif.

The protein belongs to the class-I aminoacyl-tRNA synthetase family. Homodimer.

The protein resides in the cytoplasm. It catalyses the reaction tRNA(Trp) + L-tryptophan + ATP = L-tryptophyl-tRNA(Trp) + AMP + diphosphate + H(+). With respect to regulation, inhibited by indolmycin, a competitive inhibitor for tryptophan. Functionally, catalyzes the attachment of tryptophan to tRNA(Trp). In Geobacillus stearothermophilus (Bacillus stearothermophilus), this protein is Tryptophan--tRNA ligase.